A 97-amino-acid polypeptide reads, in one-letter code: Large ribosomal subunit protein bL28 (97 aa).

It belongs to the bacterial ribosomal protein bL28 family.

This chain is Large ribosomal subunit protein bL28, found in Rickettsia africae (strain ESF-5).